We begin with the raw amino-acid sequence, 336 residues long: Holliday junction branch migration complex subunit RuvB (336 aa).

Residues 1 to 184 form a large ATPase domain (RuvB-L) region; sequence MYDEERIVSG…FGIVGHMEYY (184 aa). ATP-binding positions include Leu-23, Arg-24, Gly-65, Lys-68, Thr-69, Thr-70, 131–133, Arg-174, Tyr-184, and Arg-221; that span reads EDY. Thr-69 lines the Mg(2+) pocket. A small ATPAse domain (RuvB-S) region spans residues 185 to 255; sequence NEVDLSQIIK…IVQFALDLLR (71 aa). The head domain (RuvB-H) stretch occupies residues 258 to 336; the sequence is KVGLDRTDRK…HLGIKYNKEG (79 aa). DNA contacts are provided by Arg-313 and Arg-318.

Belongs to the RuvB family. In terms of assembly, homohexamer. Forms an RuvA(8)-RuvB(12)-Holliday junction (HJ) complex. HJ DNA is sandwiched between 2 RuvA tetramers; dsDNA enters through RuvA and exits via RuvB. An RuvB hexamer assembles on each DNA strand where it exits the tetramer. Each RuvB hexamer is contacted by two RuvA subunits (via domain III) on 2 adjacent RuvB subunits; this complex drives branch migration. In the full resolvosome a probable DNA-RuvA(4)-RuvB(12)-RuvC(2) complex forms which resolves the HJ.

The protein resides in the cytoplasm. The enzyme catalyses ATP + H2O = ADP + phosphate + H(+). Its function is as follows. The RuvA-RuvB-RuvC complex processes Holliday junction (HJ) DNA during genetic recombination and DNA repair, while the RuvA-RuvB complex plays an important role in the rescue of blocked DNA replication forks via replication fork reversal (RFR). RuvA specifically binds to HJ cruciform DNA, conferring on it an open structure. The RuvB hexamer acts as an ATP-dependent pump, pulling dsDNA into and through the RuvAB complex. RuvB forms 2 homohexamers on either side of HJ DNA bound by 1 or 2 RuvA tetramers; 4 subunits per hexamer contact DNA at a time. Coordinated motions by a converter formed by DNA-disengaged RuvB subunits stimulates ATP hydrolysis and nucleotide exchange. Immobilization of the converter enables RuvB to convert the ATP-contained energy into a lever motion, pulling 2 nucleotides of DNA out of the RuvA tetramer per ATP hydrolyzed, thus driving DNA branch migration. The RuvB motors rotate together with the DNA substrate, which together with the progressing nucleotide cycle form the mechanistic basis for DNA recombination by continuous HJ branch migration. Branch migration allows RuvC to scan DNA until it finds its consensus sequence, where it cleaves and resolves cruciform DNA. The sequence is that of Holliday junction branch migration complex subunit RuvB from Ligilactobacillus salivarius (strain UCC118) (Lactobacillus salivarius).